A 349-amino-acid chain; its full sequence is Mitogen-activated protein kinase sty1 (349 aa).

The Protein kinase domain maps to 20–299 (YSDLQPIGMG…AADALAHNYL (280 aa)). Residues 26–34 (IGMGAFGLV) and K49 contribute to the ATP site. Catalysis depends on D141, which acts as the Proton acceptor. A Phosphothreonine modification is found at T171. Residues 171–173 (TGY) carry the TXY motif. Y173 is modified (phosphotyrosine). Phosphoserine is present on S175. Residue T176 is modified to Phosphothreonine. The TXY motif lies at 176-178 (TRY).

This sequence belongs to the protein kinase superfamily. Ser/Thr protein kinase family. MAP kinase subfamily. HOG1 sub-subfamily. As to quaternary structure, interacts with cdc37, cmk2, hal4, sin1 and srk1. Mg(2+) serves as cofactor. Dually phosphorylated on Thr-171 and Tyr-173, which activates the enzyme. Phosphorylated by wis1 in response to osmotic stress, nutrient limitation, hydrogen peroxide and arsenite. Dephosphorylated by pyp1 and pyp2.

The protein localises to the cytoplasm. It is found in the nucleus. The enzyme catalyses L-seryl-[protein] + ATP = O-phospho-L-seryl-[protein] + ADP + H(+). It carries out the reaction L-threonyl-[protein] + ATP = O-phospho-L-threonyl-[protein] + ADP + H(+). Its activity is regulated as follows. Activated by the MAPK kinase wisl, and negatively regulated by pypl and pyp2 tyrosine phosphatases. Its function is as follows. Proline-directed serine/threonine-protein kinase involved in a signal transduction pathway that is activated by changes in the osmolarity of the extracellular environment. Controls osmotic regulation of transcription of target genes. Involved in osmoregulation and stress response pathways leading to an efficient start of sexual differentiation. Supports translation initiation and facilitates adaptation to environmental stress in part through reducing eIF2-alpha phosphorylation. Links the cell-cycle G2/M control with changes in the extracellular environment that affect cell physiology. Phosphorylates atf1 and mkp1. In conjunction with hal4, has a role in the cellular resistance to toxic cations such as Na(+), Li(+) and Ca(2+). Involved in resistance to arsenite, methylglyoxal and hydrogen peroxide. Involved in induction of thermotolerance in mRNA export, as well as in vacuolar fission. The sequence is that of Mitogen-activated protein kinase sty1 (sty1) from Schizosaccharomyces pombe (strain 972 / ATCC 24843) (Fission yeast).